We begin with the raw amino-acid sequence, 81 residues long: uncharacterized protein (81 aa).

Residues 1–31 (MRYNSFLSVLALFNVLLWFTFILAISMTFSA) form the signal peptide. A helical transmembrane segment spans residues 52–74 (WFFVLLPYVIGLFFAIFDSATIG).

The protein localises to the membrane. This is an uncharacterized protein from Pasteurella multocida (strain Pm70).